We begin with the raw amino-acid sequence, 666 residues long: 7SK snRNA methylphosphate capping enzyme (666 aa).

At Met-1 the chain carries N-acetylmethionine. Basic and acidic residues predominate over residues 1-10 (MIEMAAEKEP). Residues 1–141 (MIEMAAEKEP…GSGGSFKHPA (141 aa)) form a disordered region. Over residues 50 to 61 (GPGPRAHSAGAA) the composition is skewed to low complexity. Residue Ser-57 is modified to Phosphoserine. Arg-91 bears the Omega-N-methylarginine mark. 3 positions are modified to phosphoserine: Ser-126, Ser-150, and Ser-154. Thr-188 is subject to Phosphothreonine. A phosphoserine mark is found at Ser-191, Ser-192, and Ser-229. The segment covering 235–244 (RKRHRHRGPH) has biased composition (basic residues). The segment at 235–291 (RKRHRHRGPHHQQQQQASGGNDSNAAVLPTDPLTPSLHGEGATQQQQNRGQNRDAPQ) is disordered. Low complexity predominate over residues 245–254 (HQQQQQASGG). Thr-268 bears the Phosphothreonine mark. 2 positions are modified to phosphoserine: Ser-307 and Ser-321. Over residues 309 to 337 (LPSALQGSSGSLSAPPAASVTSAPSTSSS) the composition is skewed to low complexity. Residues 309-383 (LPSALQGSSG…HHHPLPATGF (75 aa)) are disordered. Residues 338-347 (SRHRKRRRTS) are compositionally biased toward basic residues. Residue Ser-368 is modified to Phosphoserine. S-adenosyl-L-methionine contacts are provided by residues Tyr-399, Arg-410, 428-430 (GCN), 451-452 (DI), 536-537 (NY), and Phe-558. One can recognise a Bin3-type SAM domain in the interval 408–663 (DVRLRVLKPE…PVYLFHKARS (256 aa)). Residue Lys-620 forms a Glycyl lysine isopeptide (Lys-Gly) (interchain with G-Cter in SUMO2) linkage.

This sequence belongs to the methyltransferase superfamily. In terms of assembly, core component of the 7SK RNP complex, at least composed of 7SK RNA, LARP7, MEPCE, HEXIM1 (or HEXIM2) and P-TEFb (composed of CDK9 and CCNT1/cyclin-T1). Interacts with METTL16. Interacts with RBM7; upon genotoxic stress this interaction is enhanced, triggering the release of inactive P-TEFb complex from the core, yielding to P-TEFb complex activation. Dephosphorylated at Ser-126 by the PNUTS-PP1 complex, promoting RNA polymerase II transcription pause-release.

The protein resides in the nucleus. The catalysed reaction is a 5'-end triphospho-guanosine-ribonucleotide-snRNA + S-adenosyl-L-methionine = a 5'-end methyltriphosphate-guanosine-ribonucleotide-snRNA + S-adenosyl-L-homocysteine. Its function is as follows. S-adenosyl-L-methionine-dependent methyltransferase that adds a methylphosphate cap at the 5'-end of 7SK snRNA (7SK RNA), leading to stabilize it. Also has a non-enzymatic function as part of the 7SK RNP complex: the 7SK RNP complex sequesters the positive transcription elongation factor b (P-TEFb) in a large inactive 7SK RNP complex preventing RNA polymerase II phosphorylation and subsequent transcriptional elongation. The 7SK RNP complex also promotes snRNA gene transcription by RNA polymerase II via interaction with the little elongation complex (LEC). In the 7SK RNP complex, MEPCE is required to stabilize 7SK RNA and facilitate the assembly of 7SK RNP complex. MEPCE has a non-enzymatic function in the 7SK RNP complex; it has a non-enzymatic function; interaction with LARP7 within the 7SK RNP complex occluding its catalytic center. Also required for stability of U6 snRNAs. The sequence is that of 7SK snRNA methylphosphate capping enzyme from Mus musculus (Mouse).